The primary structure comprises 138 residues: Basic phospholipase A2 Drk-b1 (138 aa).

The first 16 residues, 1–16, serve as a signal peptide directing secretion; the sequence is MRTLWIVAMCLIGVEG. Disulfide bonds link C42–C131, C44–C60, C59–C111, C65–C138, C66–C104, C73–C97, and C91–C102. Residues Y43, G45, and G47 each coordinate Ca(2+). The active site involves H63. Residue D64 participates in Ca(2+) binding. The active site involves D105.

The cofactor is Ca(2+). As to expression, expressed by the venom gland.

It localises to the secreted. It catalyses the reaction a 1,2-diacyl-sn-glycero-3-phosphocholine + H2O = a 1-acyl-sn-glycero-3-phosphocholine + a fatty acid + H(+). In terms of biological role, exhibits high hydrolytic activities and shows strong preference for the anionic micelles (dPPC with deoxycholate) to the zwitterionic micelles (dPPC with Triton X-100). PLA2 catalyzes the calcium-dependent hydrolysis of the 2-acyl groups in 3-sn-phosphoglycerides. The polypeptide is Basic phospholipase A2 Drk-b1 (Daboia russelii (Russel's viper)).